The chain runs to 122 residues: Large ribosomal subunit protein uL14 (122 aa).

Belongs to the universal ribosomal protein uL14 family. In terms of assembly, part of the 50S ribosomal subunit. Forms a cluster with proteins L3 and L19. In the 70S ribosome, L14 and L19 interact and together make contacts with the 16S rRNA in bridges B5 and B8.

Its function is as follows. Binds to 23S rRNA. Forms part of two intersubunit bridges in the 70S ribosome. The polypeptide is Large ribosomal subunit protein uL14 (Micrococcus luteus (strain ATCC 4698 / DSM 20030 / JCM 1464 / CCM 169 / CCUG 5858 / IAM 1056 / NBRC 3333 / NCIMB 9278 / NCTC 2665 / VKM Ac-2230) (Micrococcus lysodeikticus)).